The primary structure comprises 186 residues: Ribosome-recycling factor (186 aa).

The protein belongs to the RRF family.

Its subcellular location is the cytoplasm. Responsible for the release of ribosomes from messenger RNA at the termination of protein biosynthesis. May increase the efficiency of translation by recycling ribosomes from one round of translation to another. The polypeptide is Ribosome-recycling factor (Nitratidesulfovibrio vulgaris (strain DP4) (Desulfovibrio vulgaris)).